An 830-amino-acid polypeptide reads, in one-letter code: Leucine--tRNA ligase (830 aa).

The short motif at 42 to 52 (PYPSGNLHMGH) is the 'HIGH' region element. The short motif at 585 to 589 (KMSKS) is the 'KMSKS' region element. Position 588 (Lys-588) interacts with ATP.

This sequence belongs to the class-I aminoacyl-tRNA synthetase family.

The protein resides in the cytoplasm. It catalyses the reaction tRNA(Leu) + L-leucine + ATP = L-leucyl-tRNA(Leu) + AMP + diphosphate. The protein is Leucine--tRNA ligase of Halothermothrix orenii (strain H 168 / OCM 544 / DSM 9562).